The primary structure comprises 101 residues: Large ribosomal subunit protein uL23 (101 aa).

This sequence belongs to the universal ribosomal protein uL23 family. As to quaternary structure, part of the 50S ribosomal subunit. Contacts protein L29, and trigger factor when it is bound to the ribosome.

Functionally, one of the early assembly proteins it binds 23S rRNA. One of the proteins that surrounds the polypeptide exit tunnel on the outside of the ribosome. Forms the main docking site for trigger factor binding to the ribosome. This chain is Large ribosomal subunit protein uL23, found in Tolumonas auensis (strain DSM 9187 / NBRC 110442 / TA 4).